A 126-amino-acid chain; its full sequence is Large ribosomal subunit protein bL17 (126 aa).

Belongs to the bacterial ribosomal protein bL17 family. Part of the 50S ribosomal subunit. Contacts protein L32.

In Aliivibrio fischeri (strain ATCC 700601 / ES114) (Vibrio fischeri), this protein is Large ribosomal subunit protein bL17.